The primary structure comprises 640 residues: 2-hydroxyacyl-CoA lyase 2 (640 aa).

The helical transmembrane segment at 2–22 (VLFLIIAAIIIGLLLWKWLDV) threads the bilayer. Glutamate 102 provides a ligand contact to thiamine diphosphate. The tract at residues 477–557 (DFVGSAAYIV…VIGIVGNDAC (81 aa)) is thiamine pyrophosphate binding. Mg(2+)-binding residues include aspartate 528 and asparagine 554.

This sequence belongs to the TPP enzyme family. Mg(2+) is required as a cofactor. The cofactor is thiamine diphosphate.

It is found in the endoplasmic reticulum membrane. It catalyses the reaction 2-hydroxyoctadecanoyl-CoA = heptadecanal + formyl-CoA. It carries out the reaction (2R)-hydroxyhexadecanoyl-CoA = pentadecanal + formyl-CoA. Its function is as follows. Endoplasmic reticulum 2-OH acyl-CoA lyase involved in the cleavage (C1 removal) reaction in the fatty acid alpha-oxydation in a thiamine pyrophosphate (TPP)-dependent manner. This Caenorhabditis elegans protein is 2-hydroxyacyl-CoA lyase 2.